A 119-amino-acid chain; its full sequence is Chorion class CA protein ERA.2 (119 aa).

A signal peptide spans 1 to 21 (MSKLVVFLFCIQVCFIQNVYS). A left arm region spans residues 22–55 (QCLGRVGPGGPPLGPYGGPLGGPGYGPVGYGGCG). The tract at residues 56–103 (GYGGSGIGNVAVAGELPVAGSTGVTGQVPVIGAVEFAGPACAVGSVSI) is central domain. The interval 104–119 (SGACGPTCGCGGSPFY) is right arm.

It belongs to the chorion protein family.

Its function is as follows. This protein is one of many from the eggshell of the silk moth. The protein is Chorion class CA protein ERA.2 (ERA.2) of Bombyx mori (Silk moth).